Consider the following 525-residue polypeptide: Tigger transposable element-derived protein 2 (525 aa).

The HTH psq-type domain maps to 1 to 52 (MLGKRKRVVLTIKDKLDIIKKLEEGISFKKLSVVYGIGESTVRDIKKNKERI). DNA-binding regions (H-T-H motif) lie at residues 28–48 (FKKL…IKKN) and 100–132 (TICA…FKQR). The HTH CENPB-type domain maps to 67–139 (KRKSMKSSTY…KQRHGIPKAA (73 aa)). Residues 168 to 385 (LQPEQIYGAD…VKSSTITKAW (218 aa)) enclose the DDE-1 domain. The segment at 442 to 474 (QVLTDSESAEDQTKAAEQKPSSKSRKTELNPEK) is disordered.

Belongs to the tigger transposable element derived protein family.

It localises to the nucleus. This chain is Tigger transposable element-derived protein 2 (TIGD2), found in Homo sapiens (Human).